Consider the following 423-residue polypeptide: MNKILPEMKSTQNLISSSPPPPLIPLKSNTSLSNLNSKITPNILLIIIILSIIFFISGLLHILVKFLLTPSRESREDYFDNVTALQGQLQQLFNLHDSGVDQSLIDTLPVFHYKSIVGLKISPFDCPVCLCEFETEDKLRLLPKCSHAFHVECIDTWLLSHSTCPLCRSNLLSGFSSHHNLSSSYLLVLESEQSSRDMVPVLESNSQLGYDVNNDSESTRIRSGRKSCDPDGDMDGLDEKVVPLEVKLGKFRNIDHVGEGSDQKKNSISGNSKNVDGRRCLSMGSYEYIMDQEATLKVHVSTKKLSGKDRVPSHRTVMSECGFDPTVKGIEKSVVERESFSLSKIWLRGKKEKQKGTSARDSDCSFVSSSSLRFPNHRIPPEESLKSENSESLETKTPSFARRTMHWLAGRQNKIVQPSTSNV.

A helical transmembrane segment spans residues 43 to 63 (ILLIIIILSIIFFISGLLHIL). The segment at 126–168 (CPVCLCEFETEDKLRLLPKCSHAFHVECIDTWLLSHSTCPLCR) adopts an RING-type; atypical zinc-finger fold. 2 disordered regions span residues 213 to 236 (NNDS…DMDG) and 377 to 399 (HRIP…KTPS). Basic and acidic residues predominate over residues 379–389 (IPPEESLKSEN).

This sequence belongs to the RING-type zinc finger family. ATL subfamily.

The protein resides in the membrane. It carries out the reaction S-ubiquitinyl-[E2 ubiquitin-conjugating enzyme]-L-cysteine + [acceptor protein]-L-lysine = [E2 ubiquitin-conjugating enzyme]-L-cysteine + N(6)-ubiquitinyl-[acceptor protein]-L-lysine.. Its pathway is protein modification; protein ubiquitination. Functionally, may be involved in female gametophyte development. This chain is Putative RING-H2 finger protein ATL49 (ATL49), found in Arabidopsis thaliana (Mouse-ear cress).